The following is a 265-amino-acid chain: tRNA (guanine-N(1)-)-methyltransferase (265 aa).

Residues Gly119 and 139 to 144 (IGDYVL) contribute to the S-adenosyl-L-methionine site.

This sequence belongs to the RNA methyltransferase TrmD family. In terms of assembly, homodimer.

The protein resides in the cytoplasm. It catalyses the reaction guanosine(37) in tRNA + S-adenosyl-L-methionine = N(1)-methylguanosine(37) in tRNA + S-adenosyl-L-homocysteine + H(+). In terms of biological role, specifically methylates guanosine-37 in various tRNAs. This chain is tRNA (guanine-N(1)-)-methyltransferase, found in Alcanivorax borkumensis (strain ATCC 700651 / DSM 11573 / NCIMB 13689 / SK2).